A 37-amino-acid polypeptide reads, in one-letter code: Cytochrome b6-f complex subunit 5 (37 aa).

The helical transmembrane segment at 5–25 (LLSGIVLGLIVVTLSGLFYAA) threads the bilayer.

Belongs to the PetG family. The 4 large subunits of the cytochrome b6-f complex are cytochrome b6, subunit IV (17 kDa polypeptide, PetD), cytochrome f and the Rieske protein, while the 4 small subunits are PetG, PetL, PetM and PetN. The complex functions as a dimer.

It localises to the cellular thylakoid membrane. Component of the cytochrome b6-f complex, which mediates electron transfer between photosystem II (PSII) and photosystem I (PSI), cyclic electron flow around PSI, and state transitions. PetG is required for either the stability or assembly of the cytochrome b6-f complex. The polypeptide is Cytochrome b6-f complex subunit 5 (Trichormus variabilis (strain ATCC 29413 / PCC 7937) (Anabaena variabilis)).